A 380-amino-acid chain; its full sequence is MAPNLRKSHPLLKMVNNSLIDLPTPPNISAWWNFGSLLGICLTTQILTGLLLAMHYTADTTLAFSSVAHTCRNVQYGWLIRNIHANGASFFFICIYLHIGRGLYYGSYLYKETWNTGILLLLTLMATAFVGYVLPWGQMSFWGATVITNLFSAIPYIGQTIVEWAWGGFSVDNPTLTRFFALHFLLPFMIAGLTLIHLTFLHESGSNNPLGIVSNCDKIPFHPYFSLKDTLGFMLMLLPLTTLALFSPNLLGDPENFTPANPLVTPPHIKPEWYFLFAYAILRSIPNKLGGVLALAASVLILFLSPLLHKSKQRTMAFRPLSQLLFWILIANLFILTWVGSQPVEHPFIIIGQLASLTYFTILLILLPITGALENKMLNY.

The next 4 helical transmembrane spans lie at 34–54 (FGSL…LLAM), 78–99 (WLIR…YLHI), 114–134 (WNTG…GYVL), and 179–199 (FFAL…IHLT). Heme b is bound by residues His-84 and His-98. Residues His-183 and His-197 each contribute to the heme b site. His-202 serves as a coordination point for a ubiquinone. The next 4 helical transmembrane spans lie at 227-247 (LKDT…ALFS), 289-309 (LGGV…PLLH), 321-341 (LSQL…WVGS), and 348-368 (FIII…ILLP).

The protein belongs to the cytochrome b family. The cytochrome bc1 complex contains 11 subunits: 3 respiratory subunits (MT-CYB, CYC1 and UQCRFS1), 2 core proteins (UQCRC1 and UQCRC2) and 6 low-molecular weight proteins (UQCRH/QCR6, UQCRB/QCR7, UQCRQ/QCR8, UQCR10/QCR9, UQCR11/QCR10 and a cleavage product of UQCRFS1). This cytochrome bc1 complex then forms a dimer. Heme b is required as a cofactor.

It is found in the mitochondrion inner membrane. Component of the ubiquinol-cytochrome c reductase complex (complex III or cytochrome b-c1 complex) that is part of the mitochondrial respiratory chain. The b-c1 complex mediates electron transfer from ubiquinol to cytochrome c. Contributes to the generation of a proton gradient across the mitochondrial membrane that is then used for ATP synthesis. This is Cytochrome b (MT-CYB) from Fregetta tropica (Black-bellied storm-petrel).